A 288-amino-acid chain; its full sequence is Diaminopimelate epimerase (288 aa).

The substrate site is built by asparagine 13, glutamine 46, and asparagine 66. The active-site Proton donor is the cysteine 75. Substrate contacts are provided by residues 76 to 77 (GN), asparagine 166, asparagine 199, and 217 to 218 (ER). The Proton acceptor role is filled by cysteine 226. 227–228 (GT) is a binding site for substrate.

It belongs to the diaminopimelate epimerase family. Homodimer.

The protein resides in the cytoplasm. It catalyses the reaction (2S,6S)-2,6-diaminopimelate = meso-2,6-diaminopimelate. It participates in amino-acid biosynthesis; L-lysine biosynthesis via DAP pathway; DL-2,6-diaminopimelate from LL-2,6-diaminopimelate: step 1/1. In terms of biological role, catalyzes the stereoinversion of LL-2,6-diaminopimelate (L,L-DAP) to meso-diaminopimelate (meso-DAP), a precursor of L-lysine and an essential component of the bacterial peptidoglycan. The protein is Diaminopimelate epimerase of Cupriavidus necator (strain ATCC 17699 / DSM 428 / KCTC 22496 / NCIMB 10442 / H16 / Stanier 337) (Ralstonia eutropha).